The chain runs to 186 residues: Protein Syd (186 aa).

It belongs to the Syd family.

Its subcellular location is the cell inner membrane. Interacts with the SecY protein in vivo. May bind preferentially to an uncomplexed state of SecY, thus functioning either as a chelating agent for excess SecY in the cell or as a regulatory factor that negatively controls the translocase function. The polypeptide is Protein Syd (Erwinia tasmaniensis (strain DSM 17950 / CFBP 7177 / CIP 109463 / NCPPB 4357 / Et1/99)).